Here is a 692-residue protein sequence, read N- to C-terminus: Small conductance calcium-activated potassium channel-like protein 3 (692 aa).

Residues 270-290 (SLYLALFGVILMLVESEITAE) traverse the membrane as a helical segment. The chain crosses the membrane as a helical span at residues 313–333 (TIALLYHIILYHLNDIVLELV). A helical membrane pass occupies residues 349-369 (VIQFCIEFICCGICPLPGSGE). A helical membrane pass occupies residues 401 to 421 (VILSCFMLCRSYLFARFMVLH). Residues 455–475 (PVLFLTTFTFIFWIIMSWMFV) traverse the membrane as a helical segment. Positions 492–512 (YSNSLWFIAITFMLNGYGDIV) form an intramembrane region, pore-forming. A helical transmembrane segment spans residues 520–540 (FIAIFVGVVGAVISSILIAVI). The span at 667-683 (HSTPNVPHLQGLTSSPV) shows a compositional bias: polar residues. A disordered region spans residues 667 to 692 (HSTPNVPHLQGLTSSPVPSDRYDNRF).

Belongs to the potassium channel KCNN family. SK subfamily. In terms of assembly, heterooligomer.

It is found in the membrane. Functionally, forms a voltage-independent potassium channel activated by intracellular calcium. This chain is Small conductance calcium-activated potassium channel-like protein 3 (kcnl-3), found in Caenorhabditis elegans.